Consider the following 451-residue polypeptide: 3-carboxy-cis,cis-muconate cycloisomerase (451 aa).

This sequence belongs to the class-II fumarase/aspartase family. In terms of assembly, homotetramer.

It catalyses the reaction 2-(carboxymethyl)-5-oxo-2,5-dihydro-2-furoate = 3-carboxy-cis,cis-muconate + H(+). It participates in aromatic compound metabolism; beta-ketoadipate pathway; 5-oxo-4,5-dihydro-2-furylacetate from 3-carboxy-cis,cis-muconate: step 1/2. In terms of biological role, catalyzes an anti cycloisomerization. This Acinetobacter baylyi (strain ATCC 33305 / BD413 / ADP1) protein is 3-carboxy-cis,cis-muconate cycloisomerase (pcaB).